We begin with the raw amino-acid sequence, 441 residues long: Deoxyguanosinetriphosphate triphosphohydrolase-like protein 1 (441 aa).

The HD domain occupies 62–255 (RLTHSLEAAQ…MELADDIAYG (194 aa)).

It belongs to the dGTPase family. Type 2 subfamily.

This chain is Deoxyguanosinetriphosphate triphosphohydrolase-like protein 1, found in Vibrio cholerae serotype O1 (strain ATCC 39315 / El Tor Inaba N16961).